The sequence spans 520 residues: Calcium-dependent protein kinase 25 (520 aa).

Glycine 2 is lipidated: N-myristoyl glycine. Residues 31–87 form a disordered region; sequence PLKPQLQDKPPQPMLMNKDDDKTKLNDTHGDPKLLEGKEKPAQKQTSQGQGGRKCSD. Basic and acidic residues predominate over residues 47-72; that stretch reads NKDDDKTKLNDTHGDPKLLEGKEKPA. The 259-residue stretch at 132–390 folds into the Protein kinase domain; sequence YNLGSKLGHG…AQQVLCHPWI (259 aa). ATP contacts are provided by residues 138-146 and lysine 161; that span reads LGHGQFGTT. The active-site Proton acceptor is aspartate 256. Serine 296 carries the post-translational modification Phosphoserine. Residues 396–426 are autoinhibitory domain; sequence APDTPLDTTVLSRLKKFSATDKLKKMALRVI. The region spanning 433-468 is the EF-hand 1 domain; the sequence is EEIHELRETFKTIDSGKSGRVTYKELKNGLERFNTN. Aspartate 446, serine 450, arginine 452, glutamate 457, aspartate 483, glutamate 487, threonine 489, and glutamate 494 together coordinate Ca(2+). The region spanning 469 to 505 is the EF-hand 2; degenerate domain; it reads LDNSDINSLMQIPTDVHLEDTVDYNEFIEAIVRLRQI.

It belongs to the protein kinase superfamily. Ser/Thr protein kinase family. CDPK subfamily.

Its subcellular location is the membrane. The catalysed reaction is L-seryl-[protein] + ATP = O-phospho-L-seryl-[protein] + ADP + H(+). The enzyme catalyses L-threonyl-[protein] + ATP = O-phospho-L-threonyl-[protein] + ADP + H(+). With respect to regulation, activated by calcium. Autophosphorylation may play an important role in the regulation of the kinase activity. May play a role in signal transduction pathways that involve calcium as a second messenger. The polypeptide is Calcium-dependent protein kinase 25 (CPK25) (Arabidopsis thaliana (Mouse-ear cress)).